A 148-amino-acid polypeptide reads, in one-letter code: Protein Smg homolog (148 aa).

This sequence belongs to the Smg family.

The chain is Protein Smg homolog from Thiobacillus denitrificans (strain ATCC 25259 / T1).